A 201-amino-acid chain; its full sequence is FMN-dependent NADH:quinone oxidoreductase (201 aa).

FMN is bound by residues Ser10, 16–18, 96–99, and 140–143; these read SQS, MYNF, and SRGG.

It belongs to the azoreductase type 1 family. In terms of assembly, homodimer. Requires FMN as cofactor.

The catalysed reaction is 2 a quinone + NADH + H(+) = 2 a 1,4-benzosemiquinone + NAD(+). It catalyses the reaction N,N-dimethyl-1,4-phenylenediamine + anthranilate + 2 NAD(+) = 2-(4-dimethylaminophenyl)diazenylbenzoate + 2 NADH + 2 H(+). Its function is as follows. Quinone reductase that provides resistance to thiol-specific stress caused by electrophilic quinones. Also exhibits azoreductase activity. Catalyzes the reductive cleavage of the azo bond in aromatic azo compounds to the corresponding amines. This chain is FMN-dependent NADH:quinone oxidoreductase, found in Escherichia coli O6:H1 (strain CFT073 / ATCC 700928 / UPEC).